The primary structure comprises 272 residues: Undecaprenyl-diphosphatase (272 aa).

The next 8 helical transmembrane spans lie at 5–25 (YSLF…FLPV), 45–65 (AKTF…VVFW), 88–108 (HLTL…GLAF), 114–134 (ALFD…LLLA), 153–172 (YRQA…PGFS), 189–209 (YAAS…ASGL), 221–241 (GDLP…LIAI), and 251–271 (ISFV…YWVF).

This sequence belongs to the UppP family.

It is found in the cell inner membrane. It catalyses the reaction di-trans,octa-cis-undecaprenyl diphosphate + H2O = di-trans,octa-cis-undecaprenyl phosphate + phosphate + H(+). Catalyzes the dephosphorylation of undecaprenyl diphosphate (UPP). Confers resistance to bacitracin. This Yersinia pseudotuberculosis serotype IB (strain PB1/+) protein is Undecaprenyl-diphosphatase.